Consider the following 438-residue polypeptide: 3-phosphoshikimate 1-carboxyvinyltransferase (438 aa).

Positions 28, 29, and 33 each coordinate 3-phosphoshikimate. Lys-28 lines the phosphoenolpyruvate pocket. Positions 97 and 125 each coordinate phosphoenolpyruvate. 3-phosphoshikimate is bound by residues Ser-168, Ser-169, Gln-170, Glu-316, and His-343. Gln-170 is a binding site for phosphoenolpyruvate. Catalysis depends on Glu-316, which acts as the Proton acceptor. Residues Arg-347, Arg-388, and Lys-413 each coordinate phosphoenolpyruvate.

This sequence belongs to the EPSP synthase family. In terms of assembly, monomer.

Its subcellular location is the cytoplasm. The catalysed reaction is 3-phosphoshikimate + phosphoenolpyruvate = 5-O-(1-carboxyvinyl)-3-phosphoshikimate + phosphate. Its pathway is metabolic intermediate biosynthesis; chorismate biosynthesis; chorismate from D-erythrose 4-phosphate and phosphoenolpyruvate: step 6/7. In terms of biological role, catalyzes the transfer of the enolpyruvyl moiety of phosphoenolpyruvate (PEP) to the 5-hydroxyl of shikimate-3-phosphate (S3P) to produce enolpyruvyl shikimate-3-phosphate and inorganic phosphate. This chain is 3-phosphoshikimate 1-carboxyvinyltransferase, found in Rhodococcus jostii (strain RHA1).